A 223-amino-acid polypeptide reads, in one-letter code: Endonuclease V (223 aa).

Positions 35 and 103 each coordinate Mg(2+).

It belongs to the endonuclease V family. Mg(2+) is required as a cofactor.

The protein resides in the cytoplasm. It carries out the reaction Endonucleolytic cleavage at apurinic or apyrimidinic sites to products with a 5'-phosphate.. Functionally, DNA repair enzyme involved in the repair of deaminated bases. Selectively cleaves double-stranded DNA at the second phosphodiester bond 3' to a deoxyinosine leaving behind the intact lesion on the nicked DNA. The sequence is that of Endonuclease V from Shigella dysenteriae serotype 1 (strain Sd197).